We begin with the raw amino-acid sequence, 347 residues long: Phenylalanine--tRNA ligase alpha subunit (347 aa).

Residue E262 coordinates Mg(2+).

This sequence belongs to the class-II aminoacyl-tRNA synthetase family. Phe-tRNA synthetase alpha subunit type 1 subfamily. In terms of assembly, tetramer of two alpha and two beta subunits. Mg(2+) serves as cofactor.

The protein resides in the cytoplasm. It carries out the reaction tRNA(Phe) + L-phenylalanine + ATP = L-phenylalanyl-tRNA(Phe) + AMP + diphosphate + H(+). The chain is Phenylalanine--tRNA ligase alpha subunit from Roseiflexus sp. (strain RS-1).